A 259-amino-acid chain; its full sequence is MLTVISPAKTLDYDTPPVTERFTLPQYLDDSQELIVQLRELSPAQISELMHLSDKLAGLNAARFGSWTPDFTPANAKQALLAFKGDVYTGLDAETLSEDDFTYAQQHLRMLSGLYGLLRPLDLMQPYRLEMGTKLANARGKDLYAFWGTRISQWLNQALTEQGDDLLLNLASNEYFSAVKRSALKGRVINVDFKDLKNGQYKIISFYAKKARGMMSRFVIQERVNDPQQLKQFDVQGYYYSAEQSKPDHLVFLRDHPAE.

Belongs to the UPF0246 family.

This is UPF0246 protein PputW619_0896 from Pseudomonas putida (strain W619).